Consider the following 166-residue polypeptide: Phospholipase A2 inhibitor clone 11 (166 aa).

The N-terminal stretch at 1 to 19 is a signal peptide; it reads MRLILLSGLLLLGIFLANG. A C-type lectin domain is found at 46–161; sequence LKGSFLIVHK…CDDNLLVVCE (116 aa). 2 disulfide bridges follow: Cys-83/Cys-160 and Cys-138/Cys-152. A glycan (N-linked (GlcNAc...) asparagine) is linked at Asn-122.

The protein belongs to the alpha-type phospholipase A2 inhibitor family. Homotrimer; non-covalently linked. Expressed by the liver.

It is found in the secreted. Functionally, this phospholipase A2 inhibitor binds directly phospholipase A2 in the presence or absence of calcium. The sequence is that of Phospholipase A2 inhibitor clone 11 from Bothrops neuwiedi (Neuwied's lancehead).